The primary structure comprises 869 residues: MLKMSVTPMMEQYLKIKEKYKDAILFFRLGDFYEMFYEDAEIAAKELEIALTGRDAGTEERAPMAGVPYHAADFYIDKLVKKGYKVAICEQLEDPSKAKGLVKRDVVRIYTPGTIINPESMDEKSNNYLVSVYREKDNYGICAVDVTTGELYATEIKNCKNGKRIYDEIAKYSPSEIISNEEFLKNNKYIKVFKNNNCAVNAYKPLNYEASSELIEKQFDKKVEELELEDKKFVIHSLGALLSYLKELQKTSLKHINKLTLYQDNSYMGLDSNAIRNLEILESNRNKSKKGSLLGVLDRTVTPMGGRLLKKWLEEPLIDKDEIEKRLDAVEELFNNYRERIELKELLNKVYDLERLASKIVYQSVTPKDFISIKLSLQNLPKIKNILSKFSSRLLKEIYEKLDVLQDVYELIDKSIKDDPSNQLKEGNIIKDGYNEMVDKLRKASTEGKNWIANLEADEREKTGIKNLRIGYNKVFGYYIEVTKSNIPQVPDRYIRKQTLANAERYVTPELKEIEETILGAEEKLIELEYELFNEIREKVELQIVRIQNTAKYIAIIDVLISFAEVAETNKYVKPIVDYEDRIVIKEGRHPVVETISDEGFVANDIDIGPENPIMIITGPNMAGKSTYMRQVALIVLMAQVGCFVPASYARIGIVDKIFTRVGASDDIFAGQSTFMVEMSEVANILHSATSKSLIILDEVGRGTSTYDGMSIAQAVIEYIHEKIKAKTLFATHYHELTKLEGKLRGVRNFNVSVEEREDDIIFLHKIVPGGSDRSYGIQVSKLAGLPYSIIERAKEILEALERDKAVKNELEEAVSQFAFTQIDIFSSAKDALIEEIANCDPDNMTPLQALTYLYKLKEKAASLRSGVI.

619–626 contributes to the ATP binding site; sequence GPNMAGKS.

This sequence belongs to the DNA mismatch repair MutS family.

This protein is involved in the repair of mismatches in DNA. It is possible that it carries out the mismatch recognition step. This protein has a weak ATPase activity. The chain is DNA mismatch repair protein MutS from Caldanaerobacter subterraneus subsp. tengcongensis (strain DSM 15242 / JCM 11007 / NBRC 100824 / MB4) (Thermoanaerobacter tengcongensis).